Reading from the N-terminus, the 589-residue chain is Aspartate--tRNA ligase (589 aa).

Glu174 contacts L-aspartate. Residues 198–201 are aspartate; the sequence is QLFK. Arg220 is a binding site for L-aspartate. ATP-binding positions include 220–222 and Gln229; that span reads RDE. Position 448 (His448) interacts with L-aspartate. Residue Glu483 participates in ATP binding. Position 490 (Arg490) interacts with L-aspartate. 535-538 provides a ligand contact to ATP; sequence GIDR.

Belongs to the class-II aminoacyl-tRNA synthetase family. Type 1 subfamily. Homodimer.

The protein localises to the cytoplasm. The catalysed reaction is tRNA(Asp) + L-aspartate + ATP = L-aspartyl-tRNA(Asp) + AMP + diphosphate. Functionally, catalyzes the attachment of L-aspartate to tRNA(Asp) in a two-step reaction: L-aspartate is first activated by ATP to form Asp-AMP and then transferred to the acceptor end of tRNA(Asp). This is Aspartate--tRNA ligase from Xylella fastidiosa (strain 9a5c).